The sequence spans 288 residues: MSSLREEELINILPKDGPTVEEVKKYLEKYNDEFIIIKCGGSVLVDPKLFKVFIEDVVVLKKLGFNPIIVHGGGKRINSKLLEVNIKSNFINGLRVTDKDTINIVEDVLIEFNKEIVEALNELDCKAKRITSKENNIITVVQENKDLGFVGRPTGINKEFLTEIIKANKVPVIAPLGLDKDNQTFNINADTTAGSIAIELKARRLMIISDVEGVLDSEKKLIPEINSKKANELIDQEVISGGMIPKIKNCLDVASNGVKAVVIIDGRKNHSLLFELLSDKGSGTLIRE.

Residues 73-74, Arg-95, and Asn-186 each bind substrate; that span reads GG.

The protein belongs to the acetylglutamate kinase family. ArgB subfamily.

The protein resides in the cytoplasm. The enzyme catalyses N-acetyl-L-glutamate + ATP = N-acetyl-L-glutamyl 5-phosphate + ADP. Its pathway is amino-acid biosynthesis; L-arginine biosynthesis; N(2)-acetyl-L-ornithine from L-glutamate: step 2/4. Its function is as follows. Catalyzes the ATP-dependent phosphorylation of N-acetyl-L-glutamate. In Pelagibacter ubique (strain HTCC1062), this protein is Acetylglutamate kinase.